The following is a 124-amino-acid chain: Multifunctional methyltransferase subunit TRM112 homolog B (124 aa).

Residues 2-120 (RLIVHNMLSC…SKGIPNMLLH (119 aa)) enclose the TRM112 domain.

It belongs to the TRM112 family. In terms of assembly, interacts with TRM9. Expressed in anthers.

Acts as an activator of both rRNA/tRNA and protein methyltransferases. Required for TRM9 tRNA methyltransferase activity. In Arabidopsis thaliana (Mouse-ear cress), this protein is Multifunctional methyltransferase subunit TRM112 homolog B.